The following is a 329-amino-acid chain: Catabolite control protein A (329 aa).

An HTH lacI-type domain is found at 1 to 57 (MTVTIYDVAREARVSMATVSRVVNGNQNVKAETKNKVNEVIKRLNYRPNAVARGLAS). The H-T-H motif DNA-binding region spans 5 to 24 (IYDVAREARVSMATVSRVVN).

Functionally, global transcriptional regulator of carbon catabolite repression (CCR) and carbon catabolite activation (CCA), which ensures optimal energy usage under diverse conditions. The protein is Catabolite control protein A (ccpA) of Staphylococcus aureus (strain COL).